Consider the following 212-residue polypeptide: Probable GTP-binding protein EngB (212 aa).

Residues 38-210 form the EngB-type G domain; sequence SLPEIAFVGK…KASLAKCIKP (173 aa). GTP-binding positions include 46–53, 73–77, 91–94, 158–161, and 189–191; these read GKSNVGKS, GRTRQ, DLPG, TKSD, and VSS. Residues serine 53 and threonine 75 each contribute to the Mg(2+) site.

It belongs to the TRAFAC class TrmE-Era-EngA-EngB-Septin-like GTPase superfamily. EngB GTPase family. The cofactor is Mg(2+).

Necessary for normal cell division and for the maintenance of normal septation. The polypeptide is Probable GTP-binding protein EngB (Rickettsia felis (strain ATCC VR-1525 / URRWXCal2) (Rickettsia azadi)).